Reading from the N-terminus, the 67-residue chain is Large ribosomal subunit protein eL24 (67 aa).

Positions 7, 10, 33, and 37 each coordinate Zn(2+). The C4-type zinc finger occupies 7–37 (CSYCGKPFEPGTGKMFVRNDGRVLFFCSRKC).

Belongs to the eukaryotic ribosomal protein eL24 family. In terms of assembly, part of the 50S ribosomal subunit. Forms a cluster with proteins L3 and L14. Requires Zn(2+) as cofactor.

Its function is as follows. Binds to the 23S rRNA. In Pyrococcus abyssi (strain GE5 / Orsay), this protein is Large ribosomal subunit protein eL24.